Consider the following 2130-residue polypeptide: DNA polymerase zeta catalytic subunit (2130 aa).

Disordered regions lie at residues 528-635 (PAES…TGTL), 734-891 (GCEI…HDEA), 927-954 (FTPSSGIRPPETETTPQLSPKSNESNTP), and 1189-1243 (QAKD…SAAQ). Low complexity predominate over residues 553 to 574 (TPIKSISSKSKSSPSKTPTTPI). Positions 620-629 (PRLSLQLDQG) are enriched in polar residues. Residues 735–753 (CEIERPHRSEGSALDELKP) show a composition bias toward basic and acidic residues. Composition is skewed to polar residues over residues 771–786 (SEIQTTGPRVTTTSLD), 794–808 (LSQSPKENTKTSMNG), and 818–835 (DSSSNSESPHQQENSVSE). Residues 840 to 860 (LESKPKKSDETARSCDEKLQR) are compositionally biased toward basic and acidic residues. The segment covering 938 to 954 (TETTPQLSPKSNESNTP) has biased composition (polar residues). The segment covering 1228–1243 (PSSQSSEQSVSSSAAQ) has biased composition (low complexity). Zn(2+) is bound by residues cysteine 2041, cysteine 2045, cysteine 2054, and cysteine 2057. Cysteine 2086, cysteine 2089, cysteine 2098, and cysteine 2103 together coordinate [4Fe-4S] cluster. The short motif at 2086–2103 (CQACCGRLGSLQCDSLDC) is the CysB motif element.

It belongs to the DNA polymerase type-B family. Catalytic subunit of the zeta DNA polymerase complex, which consists of PolZ1/DNApol-zeta and the accessory component PolZ2/Rev7. Interacts with the apurinic/apyrimidinic (AP) endonuclease Rrp1; the interaction is likely indirect and mediated via PolZ2. [4Fe-4S] cluster serves as cofactor.

The enzyme catalyses DNA(n) + a 2'-deoxyribonucleoside 5'-triphosphate = DNA(n+1) + diphosphate. Inhibited by tetracyclic diterpene antibiotic aphidicolin. As the catalytic subunit of the DNA polymerase zeta complex, plays a crucial role in translesion DNA synthesis (TLS) and various DNA repair mechanisms. Lacks an intrinsic 3'-5' exonuclease activity and thus has no proofreading function. During homologous recombination (HR) repair, has a overlapping role with the error-prone translesion polymerase eta to initiate repair synthesis which is completed by end joining or another polymerase that can bind and reinitiate synthesis. May participate in the Rrp1-dependent base excision repair (BER) pathway responsible for repair of DNA lesions that gives rise to apurinic/apyrimidinic (AP) sites. Unlike mammalian orthologs, it is not an error-prone polymerase. This is DNA polymerase zeta catalytic subunit from Drosophila melanogaster (Fruit fly).